The primary structure comprises 994 residues: Tyrosine-protein kinase Mer (994 aa).

The first 18 residues, 1-18 (MVLAPLLLGLLLLPALWS), serve as a signal peptide directing secretion. Residues 19-497 (GGTAEKWEET…TPAPGNTDSM (479 aa)) are Extracellular-facing. Positions 44 to 78 (VNHRPFSAPHSSRDQLPPPQTGRSHPAHTAAPQVT) are disordered. 2 Ig-like C2-type domains span residues 75-181 (PQVT…EIVS) and 192-268 (PYFI…LTVS). N-linked (GlcNAc...) asparagine glycans are attached at residues asparagine 91, asparagine 108, asparagine 165, asparagine 202, asparagine 210, asparagine 229, asparagine 289, asparagine 311, asparagine 324, asparagine 331, asparagine 349, asparagine 384, asparagine 390, asparagine 437, and asparagine 449. Cysteine 109 and cysteine 170 are oxidised to a cystine. Residues cysteine 213 and cysteine 257 are joined by a disulfide bond. 2 consecutive Fibronectin type-III domains span residues 281–376 (PPTE…TTEG) and 381–478 (APLN…IPEH). The chain crosses the membrane as a helical span at residues 498–518 (FIILGCFCGFILIGLILCISL). At 519–994 (ALRRRVQETK…DSLEDSEVLM (476 aa)) the chain is on the cytoplasmic side. Phosphoserine is present on serine 538. A Protein kinase domain is found at 582-852 (LVLGKVLGEG…SVLRLQLEKL (271 aa)). Residues 588–596 (LGEGEFGSV) and lysine 610 contribute to the ATP site. Aspartate 718 (proton acceptor) is an active-site residue. A phosphotyrosine; by autocatalysis mark is found at tyrosine 744, tyrosine 748, tyrosine 749, and tyrosine 867.

This sequence belongs to the protein kinase superfamily. Tyr protein kinase family. AXL/UFO subfamily. In terms of assembly, interacts (upon activation) with TNK2; stimulates TNK2 autophosphorylation. Interacts (via N-terminus) with extracellular ligands LGALS3, TUB, TULP1 and GAS6. Interacts with VAV1 in a phosphotyrosine-independent manner. Interacts with TIMD4; this interaction enhances TIMD4-mediated efferocytosis. In terms of processing, autophosphorylated on Tyr-744, Tyr-748 and Tyr-749 in the activation loop allowing full activity. Autophosphorylated on Tyr-867 leading to recruitment of downstream partners of the signaling cascade such as PLCG2. Expressed predominantly in the hematopoietic lineages: macrophages, NK cells, NKT cells, dendritic cells and platelets.

It localises to the cell membrane. It carries out the reaction L-tyrosyl-[protein] + ATP = O-phospho-L-tyrosyl-[protein] + ADP + H(+). Functionally, receptor tyrosine kinase that transduces signals from the extracellular matrix into the cytoplasm by binding to several ligands including LGALS3, TUB, TULP1 or GAS6. Regulates many physiological processes including cell survival, migration, differentiation, and phagocytosis of apoptotic cells (efferocytosis). Ligand binding at the cell surface induces autophosphorylation of MERTK on its intracellular domain that provides docking sites for downstream signaling molecules. Following activation by ligand, interacts with GRB2 or PLCG2 and induces phosphorylation of MAPK1, MAPK2, FAK/PTK2 or RAC1. MERTK signaling plays a role in various processes such as macrophage clearance of apoptotic cells, platelet aggregation, cytoskeleton reorganization and engulfment. Functions in the retinal pigment epithelium (RPE) as a regulator of rod outer segments fragments phagocytosis. Also plays an important role in inhibition of Toll-like receptors (TLRs)-mediated innate immune response by activating STAT1, which selectively induces production of suppressors of cytokine signaling SOCS1 and SOCS3. This Mus musculus (Mouse) protein is Tyrosine-protein kinase Mer (Mertk).